A 1588-amino-acid chain; its full sequence is Centrosomal protein of 170 kDa (1588 aa).

The FHA domain occupies 23–73 (IFVGRDDCELMLQSRSVDKQHAVINYDASMDEHLVKDLGSLNGTFVNDVRI). Disordered stretches follow at residues 121–172 (LSQK…MPRG), 299–323 (KFTS…GIQT), 338–447 (QNNP…EEPS), and 461–508 (SGSL…NPNS). Position 141 is a phosphoserine (S141). Over residues 155 to 164 (EALKSEEKPM) the composition is skewed to basic and acidic residues. Basic and acidic residues predominate over residues 347-357 (ERTEEDSKSIK). 2 positions are modified to phosphoserine: S355 and S358. Y363 is modified (phosphotyrosine). Residues 407–418 (KKKAQSTEKHQE) show a composition bias toward basic and acidic residues. 3 positions are modified to phosphoserine: S443, S463, and S494. At T498 the chain carries Phosphothreonine. 4 positions are modified to phosphoserine: S568, S577, S628, and S631. Residues 602 to 854 (ELSATVENET…PHINKQNSSV (253 aa)) form a disordered region. The span at 620–631 (LRSTSCTTSLAS) shows a compositional bias: polar residues. The residue at position 639 (T639) is a Phosphothreonine. Residues 645–654 (NEEKLLESSR) are compositionally biased toward basic and acidic residues. At S662 the chain carries Phosphoserine. Residues 663 to 691 (EIGEKQDTELQEKEAQVYQSEKHDADRGL) show a composition bias toward basic and acidic residues. A Phosphoserine modification is found at S718. The segment covering 720–731 (SKEKSETEKETS) has biased composition (basic and acidic residues). Phosphothreonine is present on T752. Composition is skewed to basic and acidic residues over residues 764–774 (HIDKCREESSK) and 789–821 (SKGD…KESS). A compositionally biased stretch (polar residues) spans 822–839 (KSLVRQGSFTIDKPSSNI). Phosphoserine is present on residues S829, S870, and S872. The interval 844–1588 (IPHINKQNSS…GEEEDVTVHE (745 aa)) is targeting to microtubules. Residues 899–908 (LREDNNKTDE) show a composition bias toward basic and acidic residues. Disordered stretches follow at residues 899–1222 (LRED…RWRR) and 1228–1247 (ASTS…HTRL). Phosphothreonine occurs at positions 906 and 912. Positions 913–937 (PSYNRDNSISPESDVDTASTISLVT) are enriched in polar residues. Phosphoserine occurs at positions 922, 925, and 950. A compositionally biased stretch (basic and acidic residues) spans 967–980 (DVTKSGSREKIEKK). Position 1008 is a phosphoserine (S1008). The residue at position 1012 (T1012) is a Phosphothreonine. The span at 1028 to 1038 (IMSSDQETYSC) shows a compositional bias: polar residues. T1047 bears the Phosphothreonine mark. S1048 is subject to Phosphoserine. Residues 1049-1062 (ADEHNIHSKLEGGK) show a composition bias toward basic and acidic residues. A compositionally biased stretch (low complexity) spans 1075 to 1093 (STSKSTTLPRPRPTRTSLL). 7 positions are modified to phosphoserine: S1102, S1104, S1122, S1123, S1135, S1150, and S1155. Residues 1103 to 1588 (DSELADADKA…GEEEDVTVHE (486 aa)) form a targeting to centrosomes region. A compositionally biased stretch (low complexity) spans 1112–1128 (ASVASEVSTTSSTSKPP). Positions 1158–1173 (EATISRSSASARTAEA) are enriched in low complexity. Phosphoserine occurs at positions 1188, 1195, 1200, 1229, 1231, 1241, 1260, and 1270. A compositionally biased stretch (polar residues) spans 1191–1218 (TRANSISRLSDSKVKSMSSTHGSPSVNS). A disordered region spans residues 1315-1334 (SVTSSGTAPSTTVSTAATTP). A Phosphoserine modification is found at S1362. Positions 1370–1398 (PLVHSKTPEGNNGRSVDSRPQPAEHPDHL) are disordered. Residues 1467 to 1495 (KTSSMEISSILQELKRVEKQLQVINAMID) adopt a coiled-coil conformation. A disordered region spans residues 1511–1540 (AILPSPPKQKSSPVNNHSSPSQTPALCPPE). Over residues 1518-1534 (KQKSSPVNNHSSPSQTP) the composition is skewed to polar residues. 2 positions are modified to phosphoserine: S1521 and S1522.

It belongs to the CEP170 family. Interacts with CCDC68 and CCDC120; leading to recruitment to centrosomes. Interacts with PLK1. Interacts with NIN. Interacts with FHDC1. Interacts with CCDC61. Interacts with TBK1; efficient complex formation may be dependent on the presence of CCDC61. Phosphorylated; probably by PLK1.

It localises to the cytoplasm. The protein resides in the cytoskeleton. The protein localises to the microtubule organizing center. Its subcellular location is the centrosome. It is found in the centriole. It localises to the spindle. In terms of biological role, plays a role in microtubule organization. Required for centriole subdistal appendage assembly. This chain is Centrosomal protein of 170 kDa (Cep170), found in Mus musculus (Mouse).